The chain runs to 278 residues: Extracellular metalloprotease GLRG_06511 (278 aa).

The signal sequence occupies residues 1 to 19 (MQFKSLLVSALAAASTALA). N51 carries N-linked (GlcNAc...) asparagine glycosylation. H190 provides a ligand contact to Zn(2+). The active site involves E191. Zn(2+) is bound at residue H194. The cysteines at positions 227 and 254 are disulfide-linked.

This sequence belongs to the peptidase M43B family.

The protein resides in the secreted. In terms of biological role, secreted metalloproteinase that allows assimilation of proteinaceous substrates. In Colletotrichum graminicola (strain M1.001 / M2 / FGSC 10212) (Maize anthracnose fungus), this protein is Extracellular metalloprotease GLRG_06511.